Here is a 198-residue protein sequence, read N- to C-terminus: Glycerol-3-phosphate acyltransferase (198 aa).

Helical transmembrane passes span 5 to 25 (AVILVIGLSYLVGSVPTGYLI), 114 to 134 (VLIMLPPVALATAAAVWIAVL), and 154 to 176 (AFALGGVGWRHVLFGLFLALVAV).

Belongs to the PlsY family. In terms of assembly, probably interacts with PlsX.

Its subcellular location is the cell membrane. It carries out the reaction an acyl phosphate + sn-glycerol 3-phosphate = a 1-acyl-sn-glycero-3-phosphate + phosphate. It functions in the pathway lipid metabolism; phospholipid metabolism. Its function is as follows. Catalyzes the transfer of an acyl group from acyl-phosphate (acyl-PO(4)) to glycerol-3-phosphate (G3P) to form lysophosphatidic acid (LPA). This enzyme utilizes acyl-phosphate as fatty acyl donor, but not acyl-CoA or acyl-ACP. The chain is Glycerol-3-phosphate acyltransferase from Desulforudis audaxviator (strain MP104C).